Here is a 109-residue protein sequence, read N- to C-terminus: MTMKKLLIIILPVLLSGCSAFNQLVERMQTDTLEYQCDEKPLTVKLNNPRQEVSFVYDNQLLHLKQGISASGARYTDGIYVFWSKGDEATVYKRDRIVLNNCQLQNPQR.

Residues 1–17 (MTMKKLLIIILPVLLSG) form the signal peptide. C18 carries the N-palmitoyl cysteine lipid modification. C18 carries the S-diacylglycerol cysteine lipid modification. Cysteines 37 and 102 form a disulfide.

It belongs to the MliC family. Type 1 subfamily. As to quaternary structure, monomer.

The protein resides in the cell outer membrane. Functionally, specifically inhibits C-type lysozymes. This chain is Membrane-bound lysozyme inhibitor of C-type lysozyme, found in Escherichia coli (strain K12).